We begin with the raw amino-acid sequence, 337 residues long: Cytoskeleton protein RodZ (337 aa).

Residues 1–111 (MNTEATHDQN…LGKRRKKRDG (111 aa)) are Cytoplasmic-facing. Residues 19–71 (LRNAREQLGLSQQAVAERLCLKVSTVRDIEEDKAPADLASTFLRGYIRSYARL) form the HTH cro/C1-type domain. The segment at residues 30–49 (QQAVAERLCLKVSTVRDIEE) is a DNA-binding region (H-T-H motif). Residues 112-132 (WLMTFTWLVLFVVIGLSGAWW) traverse the membrane as a helical; Signal-anchor for type II membrane protein segment. Topologically, residues 133–337 (WQDHKAQQEE…TLNAEQSPAQ (205 aa)) are periplasmic. Residues 145–167 (TMADQSSAELSSNSEQGQSVPLN) show a composition bias toward polar residues. Residues 145 to 236 (TMADQSSAEL…TAATTPDGAA (92 aa)) are disordered. Positions 168–207 (TSTTTDPATTSTPPASVDTTATNTQTPAVTAPAPAVDPQQ) are enriched in low complexity. Over residues 208–218 (NAVVSPSQANV) the composition is skewed to polar residues. Residues 219 to 236 (DTAATPAPTAATTPDGAA) show a composition bias toward low complexity.

This sequence belongs to the RodZ family.

It localises to the cell inner membrane. Functionally, cytoskeletal protein that is involved in cell-shape control through regulation of the length of the long axis. The chain is Cytoskeleton protein RodZ from Escherichia coli O139:H28 (strain E24377A / ETEC).